Reading from the N-terminus, the 267-residue chain is Translation initiation factor 2 subunit alpha (267 aa).

One can recognise an S1 motif domain in the interval 12-83; it reads GELVVATVKE…RKKQVDVSLK (72 aa).

It belongs to the eIF-2-alpha family. Heterotrimer composed of an alpha, a beta and a gamma chain.

Its function is as follows. eIF-2 functions in the early steps of protein synthesis by forming a ternary complex with GTP and initiator tRNA. The chain is Translation initiation factor 2 subunit alpha from Hyperthermus butylicus (strain DSM 5456 / JCM 9403 / PLM1-5).